Consider the following 335-residue polypeptide: NADH-quinone oxidoreductase subunit H (335 aa).

8 helical membrane-spanning segments follow: residues 11 to 31, 81 to 101, 114 to 134, 154 to 174, 187 to 207, 238 to 258, 270 to 290, and 307 to 327; these read VILT…AGAL, VIFT…FAII, IGLL…LFAG, VSYE…VGSF, LWFI…GVAV, FFVG…TLFF, QLSF…FILL, and WKFC…VVLW.

Belongs to the complex I subunit 1 family. NDH-1 is composed of 13 different subunits. Subunits NuoA, H, J, K, L, M, N constitute the membrane sector of the complex.

The protein resides in the cell inner membrane. The catalysed reaction is a quinone + NADH + 5 H(+)(in) = a quinol + NAD(+) + 4 H(+)(out). Functionally, NDH-1 shuttles electrons from NADH, via FMN and iron-sulfur (Fe-S) centers, to quinones in the respiratory chain. The immediate electron acceptor for the enzyme in this species is believed to be ubiquinone. Couples the redox reaction to proton translocation (for every two electrons transferred, four hydrogen ions are translocated across the cytoplasmic membrane), and thus conserves the redox energy in a proton gradient. This subunit may bind ubiquinone. This Pseudomonas fluorescens (strain ATCC BAA-477 / NRRL B-23932 / Pf-5) protein is NADH-quinone oxidoreductase subunit H.